We begin with the raw amino-acid sequence, 573 residues long: Dihydroxy-acid dehydratase (573 aa).

Residues 1–14 are compositionally biased toward basic and acidic residues; that stretch reads MTEKSPKPHKRSDA. Residues 1–21 form a disordered region; the sequence is MTEKSPKPHKRSDAITEGPNR. Cys-55 contributes to the [2Fe-2S] cluster binding site. Asp-87 lines the Mg(2+) pocket. Cys-128 is a binding site for [2Fe-2S] cluster. Mg(2+)-binding residues include Asp-129 and Lys-130. An N6-carboxylysine modification is found at Lys-130. Position 200 (Cys-200) interacts with [2Fe-2S] cluster. Glu-450 provides a ligand contact to Mg(2+). Ser-476 acts as the Proton acceptor in catalysis.

This sequence belongs to the IlvD/Edd family. As to quaternary structure, homodimer. The cofactor is [2Fe-2S] cluster. Mg(2+) is required as a cofactor.

It carries out the reaction (2R)-2,3-dihydroxy-3-methylbutanoate = 3-methyl-2-oxobutanoate + H2O. The catalysed reaction is (2R,3R)-2,3-dihydroxy-3-methylpentanoate = (S)-3-methyl-2-oxopentanoate + H2O. It functions in the pathway amino-acid biosynthesis; L-isoleucine biosynthesis; L-isoleucine from 2-oxobutanoate: step 3/4. The protein operates within amino-acid biosynthesis; L-valine biosynthesis; L-valine from pyruvate: step 3/4. Functions in the biosynthesis of branched-chain amino acids. Catalyzes the dehydration of (2R,3R)-2,3-dihydroxy-3-methylpentanoate (2,3-dihydroxy-3-methylvalerate) into 2-oxo-3-methylpentanoate (2-oxo-3-methylvalerate) and of (2R)-2,3-dihydroxy-3-methylbutanoate (2,3-dihydroxyisovalerate) into 2-oxo-3-methylbutanoate (2-oxoisovalerate), the penultimate precursor to L-isoleucine and L-valine, respectively. The sequence is that of Dihydroxy-acid dehydratase from Koribacter versatilis (strain Ellin345).